The chain runs to 530 residues: MRSEKSLTLAAPGEVRGPEGEQQDAGEFQEAEGGGGCCSSERLVINISGLRYETQLRTLSLFPDTLLGDPGRRVRFFDPLRNEYFFDRNRPSFDAILYYYQSGGRLRRPVNVPLDIFMEEIRFYQLGDEALAAFREDEGCLPEGGEDEKPLPSQPFQRQVWLLFEYPESSGPARGIAIVSVLVILISIVIFCLETLPQFRADGRGGSNEGSGTRMSPASRGSHEEEDEDEDSYAFPGSIPSGGLGTGGTSSFSTLGGSFFTDPFFLVETLCIVWFTFELLVRFSACPSKAAFFRNIMNIIDLVAIFPYFITLGTELVQRHEQQPVSGGSGQNRQQAMSLAILRVIRLVRVFRIFKLSRHSKGLQILGKTLQASMRELGLLIFFLFIGVILFSSAVYFAEADDVDSLFPSIPDAFWWAVVTMTTVGYGDMYPMTVGGKIVGSLCAIAGVLTIALPVPVIVSNFNYFYHRETEQEEQGQYTHVTCGQPTPDLKATDNGLGKPDFAEASRERRSSYLPTPHRAYAEKRMLTEV.

The tract at residues 1–35 (MRSEKSLTLAAPGEVRGPEGEQQDAGEFQEAEGGG) is disordered. Ser3 is modified (phosphoserine). The span at 21–30 (EQQDAGEFQE) shows a compositional bias: acidic residues. The chain crosses the membrane as a helical span at residues 172 to 193 (PARGIAIVSVLVILISIVIFCL). The segment at 203–239 (GRGGSNEGSGTRMSPASRGSHEEEDEDEDSYAFPGSI) is disordered. Ser222 is modified (phosphoserine; by CK2). Residues 264–285 (FFLVETLCIVWFTFELLVRFSA) traverse the membrane as a helical segment. Cys286 is lipidated: S-palmitoyl cysteine. Residues 297–317 (MNIIDLVAIFPYFITLGTELV) traverse the membrane as a helical segment. Residues 339-359 (LAILRVIRLVRVFRIFKLSRH) traverse the membrane as a helical; Voltage-sensor segment. Residues 361-374 (KGLQILGKTLQASM) are S4-S5 linker. Residues 375–396 (RELGLLIFFLFIGVILFSSAVY) traverse the membrane as a helical segment. Positions 411-422 (PDAFWWAVVTMT) form an intramembrane region, helical. Positions 423–428 (TVGYGD) match the Selectivity filter motif. Residues 423–430 (TVGYGDMY) lie within the membrane without spanning it. Residues 438 to 466 (IVGSLCAIAGVLTIALPVPVIVSNFNYFY) traverse the membrane as a helical segment. Ser512 is subject to Phosphoserine; by PKA. Residues 527–529 (LTE) carry the PDZ-binding motif. Thr528 carries the phosphothreonine; by PKA modification.

The protein belongs to the potassium channel family. A (Shaker) (TC 1.A.1.2) subfamily. Kv1.6/KCNA6 sub-subfamily. As to quaternary structure, homotetramer and heterotetramer of potassium channel proteins. Interacts with KCNAB1 and KCNAB2.

The protein localises to the cell membrane. The catalysed reaction is K(+)(in) = K(+)(out). Voltage-gated potassium channel that mediates transmembrane potassium transport in excitable membranes. Forms tetrameric potassium-selective channels through which potassium ions pass in accordance with their electrochemical gradient. The channel alternates between opened and closed conformations in response to the voltage difference across the membrane. Can form functional homotetrameric channels and heterotetrameric channels that contain variable proportions of KCNA1, KCNA2, KCNA4, KNCA5, KCNA6, and possibly other family members as well; channel properties depend on the type of alpha subunits that are part of the channel. Channel properties are modulated by cytoplasmic beta subunits that regulate the subcellular location of the alpha subunits and promote rapid inactivation. Homotetrameric channels display rapid activation and slow inactivation. The sequence is that of Potassium voltage-gated channel subfamily A member 6 (Kcna6) from Rattus norvegicus (Rat).